The chain runs to 358 residues: Protein RecA (358 aa).

Gly-78 to Thr-85 provides a ligand contact to ATP.

This sequence belongs to the RecA family.

It is found in the cytoplasm. Functionally, can catalyze the hydrolysis of ATP in the presence of single-stranded DNA, the ATP-dependent uptake of single-stranded DNA by duplex DNA, and the ATP-dependent hybridization of homologous single-stranded DNAs. It interacts with LexA causing its activation and leading to its autocatalytic cleavage. The polypeptide is Protein RecA (Deinococcus geothermalis (strain DSM 11300 / CIP 105573 / AG-3a)).